The primary structure comprises 1603 residues: Gag-Pol polyprotein (1603 aa).

Basic and acidic residues predominate over residues 124-141 (KGEEVGETTAQRDAKMAP). The disordered stretch occupies residues 124 to 144 (KGEEVGETTAQRDAKMAPEKM). The PPXY motif signature appears at 172–175 (PPPY). An LYPX(n)L motif motif is present at residues 180 to 184 (LYPSL). A Nuclear export signal motif is present at residues 219–229 (LTDWARIREEL). 2 consecutive CCHC-type zinc fingers follow at residues 507–524 (GLCY…QCPK) and 533–550 (ERCQ…QCRR). The segment at 544 to 571 (NAKQCRRRDGNQGQRPGKGLSSGSWPVS) is disordered. The 82-residue stretch at 609 to 690 (ITALLDSGAD…VRGSILGRDC (82 aa)) folds into the Peptidase A2 domain. The active-site For protease activity; shared with dimeric partner is the Asp614. The region spanning 750–938 (LQLGHIEPSL…PGVQYLGYKL (189 aa)) is the Reverse transcriptase domain. Mg(2+) is bound by residues Asp815, Asp890, Asp891, Asp1158, Glu1192, Asp1213, and Asp1272. Positions 1149–1280 (PVPGPTAFTD…ADSQATFQAY (132 aa)) constitute an RNase H type-1 domain. An Integrase-type zinc finger spans residues 1280-1321 (YPLREAKDLHTALHIGPRALSKACNISMQQAREVVQTCPHCN). Zn(2+)-binding residues include His1289, His1293, Cys1317, and Cys1320. The Integrase catalytic domain occupies 1333 to 1496 (RGLGPLQIWQ…TPIQKHWRPT (164 aa)). Mg(2+) is bound by residues Asp1344, Asp1401, and Glu1437. The segment at residues 1502–1550 (PPVKIRIETGEWEKGWNVLVWGRGYAAVKNRDTDKVIWVPSRKVKPDVT) is a DNA-binding region (integrase-type). The interval 1548 to 1567 (DVTQKDEVTKKDEASPLFAG) is involved in homooctamerization. The tract at residues 1566–1603 (AGISDWIPWEDEQEGLQGETASNKQERPGEDTLAANES) is disordered.

Active as a homodimer. As to quaternary structure, homodimer. Homomultimer. Homohexamer. In terms of assembly, homodimer; further associates as a homooctamer. Heterodimer of alpha and beta subunits. Three forms of RT exist: alpha-alpha (alpha-Pol), beta-beta (beta-Pol), and alpha-beta, with the major form being the heterodimer. Both the polymerase and RNase H active sites are located in the alpha subunit of heterodimeric RT alpha-beta. Mg(2+) serves as cofactor. Mn(2+) is required as a cofactor. In terms of processing, specific enzymatic cleavages in vivo yield mature proteins. Capsid protein p27: The cleavage at the C-terminus is slowly trimmed by the viral protease, sometimes being cut internally thereby generating the short version of the capsid protein and a capsid protein C-terminally extended by 3 amino acids in a ratio of 2:1.

It localises to the virion. It catalyses the reaction DNA(n) + a 2'-deoxyribonucleoside 5'-triphosphate = DNA(n+1) + diphosphate. It carries out the reaction Endonucleolytic cleavage to 5'-phosphomonoester.. In terms of biological role, capsid protein p27: Self-associates to form the irregular polyhedron core composed of hexamers and pentamers, that encapsulates the genomic RNA-nucleocapsid complex. Assembles as a tube in vitro. Binds to inositol hexakisphosphate (IP6), which allows the assembly of the polyhedral capsid. Its function is as follows. Spacer peptide: Plays a role in the oligomerization of the Gag polyprotein and in the stabilization of the immature particle. Essential layering element during tube assembly. Functionally, binds strongly to viral nucleic acids and promotes their packaging. Plays a role in the maturation-stabilization of the viral dimeric RNA via highly structured zinc-binding motifs. The aspartyl protease that mediates proteolytic cleavages of Gag and Gag-Pol polyproteins during or shortly after the release of the virion from the plasma membrane. Cleavages take place as an ordered, step-wise cascade to yield mature proteins. This process is called maturation. Displays maximal activity during the budding process just prior to particle release from the cell. In terms of biological role, catalyzes viral DNA integration into the host chromosome, by performing a series of DNA cutting and joining reactions. This recombination event is an essential step in the viral replication cycle. Has a strong preference for using the 3'-OH at the viral DNA end as a nucleophile. The polypeptide is Gag-Pol polyprotein (gag-pol) (Avian leukosis virus subgroup A (isolate RSA) (ALV-A RSA)).